Consider the following 662-residue polypeptide: MYIHSSRTVLARYGSRTPLLRPSVLGRYSTSPAATIEARKIALNRDNYIKSVYDRIAKIPPENYRNFSIVAHVDHGKSTLSDRLLELTGVIQPGDKNQVLDRLDVERERGITVKAQTCTMIFNDPRNGQDYLLHLVDTPGHVDFRAEVSRSYASCGGALLLVDATQGVQAQTVANFYLAYSMGLKLIPIINKIDLDAADIPRAMDQVESTFELDRENCLQVSAKTGLNVKSILPAIVDHIPAPDCDINSPLKALLVDSWHDPYVGVVMLLYVKEGTIKKGMKLLSAHTEGRYEVKEVGIMYPDKVPMESIRAGQVGYIVPGMKDPSQAKIGDTFFQYGKHEGLEALPGFEEPKPMVFVGAFPAEGSEFKVMDDHIANLVLNDRSVTLEKETSNALGLGWRLGFLGSLHASVFQERLENEYGAKIILTAPTVPYKIVYKDGTDKIVTNPDEFPGSDLRNQNVDKLMEPYVNAIMTIPDEYIGAVMSLCENNRGIQKELEYLTNGQVLMRYEIPLAQLVEDFFGKLKGCTKGYASLDYEDAGYKKSDIVKMELCVNGEPQDALTQVMHRSQVQARGKEYVVRFKEYLRFQLFEVAIQAKVNNKVVARETIKAKRKDVTQKLHAADISRRKKLLSRQKEGKKQMKASGRVHINHEAYQAFLRRTI.

Residues Met-1–Tyr-28 constitute a mitochondrion transit peptide. The tr-type G domain maps to Glu-62–Asp-244. Residues Ala-71–Ser-78, Asp-137–His-141, and Asn-191–Asp-194 each bind GTP.

It belongs to the TRAFAC class translation factor GTPase superfamily. Classic translation factor GTPase family. LepA subfamily.

It localises to the mitochondrion inner membrane. The enzyme catalyses GTP + H2O = GDP + phosphate + H(+). Its function is as follows. Promotes mitochondrial protein synthesis. May act as a fidelity factor of the translation reaction, by catalyzing a one-codon backward translocation of tRNAs on improperly translocated ribosomes. Binds to mitochondrial ribosomes in a GTP-dependent manner. The chain is Translation factor GUF1, mitochondrial from Meyerozyma guilliermondii (strain ATCC 6260 / CBS 566 / DSM 6381 / JCM 1539 / NBRC 10279 / NRRL Y-324) (Yeast).